Here is a 542-residue protein sequence, read N- to C-terminus: CTP synthase (542 aa).

The interval M1–L266 is amidoligase domain. A CTP-binding site is contributed by S14. S14 contributes to the UTP binding site. Residues S15 to I20 and D72 contribute to the ATP site. 2 residues coordinate Mg(2+): D72 and E140. CTP contacts are provided by residues D147–E149, K187–Q192, and K223. UTP-binding positions include K187–Q192 and K223. Residue K239–V241 coordinates ATP. One can recognise a Glutamine amidotransferase type-1 domain in the interval T291–K542. G352 contacts L-glutamine. The active-site Nucleophile; for glutamine hydrolysis is C379. L-glutamine contacts are provided by residues L380–Q383, E403, and R470. Catalysis depends on residues H515 and E517.

The protein belongs to the CTP synthase family. As to quaternary structure, homotetramer.

The enzyme catalyses UTP + L-glutamine + ATP + H2O = CTP + L-glutamate + ADP + phosphate + 2 H(+). It carries out the reaction L-glutamine + H2O = L-glutamate + NH4(+). The catalysed reaction is UTP + NH4(+) + ATP = CTP + ADP + phosphate + 2 H(+). It participates in pyrimidine metabolism; CTP biosynthesis via de novo pathway; CTP from UDP: step 2/2. Allosterically activated by GTP, when glutamine is the substrate; GTP has no effect on the reaction when ammonia is the substrate. The allosteric effector GTP functions by stabilizing the protein conformation that binds the tetrahedral intermediate(s) formed during glutamine hydrolysis. Inhibited by the product CTP, via allosteric rather than competitive inhibition. In terms of biological role, catalyzes the ATP-dependent amination of UTP to CTP with either L-glutamine or ammonia as the source of nitrogen. Regulates intracellular CTP levels through interactions with the four ribonucleotide triphosphates. This Mannheimia succiniciproducens (strain KCTC 0769BP / MBEL55E) protein is CTP synthase.